The following is a 261-amino-acid chain: 3-methyl-2-oxobutanoate hydroxymethyltransferase (261 aa).

2 residues coordinate Mg(2+): Asp44 and Asp83. 3-methyl-2-oxobutanoate is bound by residues 44–45, Asp83, and Lys112; that span reads DS. Glu114 is a Mg(2+) binding site. Glu181 functions as the Proton acceptor in the catalytic mechanism.

Belongs to the PanB family. As to quaternary structure, homodecamer; pentamer of dimers. Mg(2+) is required as a cofactor.

The protein resides in the cytoplasm. It catalyses the reaction 3-methyl-2-oxobutanoate + (6R)-5,10-methylene-5,6,7,8-tetrahydrofolate + H2O = 2-dehydropantoate + (6S)-5,6,7,8-tetrahydrofolate. It functions in the pathway cofactor biosynthesis; (R)-pantothenate biosynthesis; (R)-pantoate from 3-methyl-2-oxobutanoate: step 1/2. Functionally, catalyzes the reversible reaction in which hydroxymethyl group from 5,10-methylenetetrahydrofolate is transferred onto alpha-ketoisovalerate to form ketopantoate. In Acidithiobacillus ferrooxidans (strain ATCC 23270 / DSM 14882 / CIP 104768 / NCIMB 8455) (Ferrobacillus ferrooxidans (strain ATCC 23270)), this protein is 3-methyl-2-oxobutanoate hydroxymethyltransferase.